Here is a 413-residue protein sequence, read N- to C-terminus: SWIRM domain-containing protein FUN19 (413 aa).

The segment covering 35 to 51 (KASNNNNDSNKNGLNMS) has biased composition (low complexity). 3 disordered regions span residues 35–55 (KASN…DYSN), 189–211 (YNDD…PLAS), and 249–271 (YSPQ…PSAS). Residue Thr194 is modified to Phosphothreonine. Low complexity predominate over residues 200–211 (SSSSRLPSPLAS). Phosphoserine occurs at positions 207 and 211. Residues 316–413 (LKIEWKGSPM…LQDSNFTKYL (98 aa)) enclose the SWIRM domain.

The protein is SWIRM domain-containing protein FUN19 (FUN19) of Saccharomyces cerevisiae (strain ATCC 204508 / S288c) (Baker's yeast).